A 556-amino-acid polypeptide reads, in one-letter code: Mitochondrial distribution and morphology protein 34-2 (556 aa).

Residues 1–195 (MAFNFNWSPL…LPAIIHRLSL (195 aa)) enclose the SMP-LTD domain. Disordered regions lie at residues 206 to 239 (EEMN…DSLG), 299 to 423 (TDTS…PVTP), and 440 to 473 (HLPS…DATP). Over residues 299 to 333 (TDTSEFPSSVISPLSPTLSREQSQMGSMSSLHETA) the composition is skewed to polar residues. The span at 334–357 (SNASMQSRPSMSSHSFSTSTYGLS) shows a compositional bias: low complexity. Residues 362–374 (RHSKAHARKRKKR) are compositionally biased toward basic residues. Residues 375 to 385 (VVDLRRPKTTD) are compositionally biased toward basic and acidic residues. Residues 391–402 (SDESVMTESSRP) show a composition bias toward polar residues. Residues 459–468 (ETIRGPKAED) show a composition bias toward basic and acidic residues.

This sequence belongs to the MDM34 family. Component of the ER-mitochondria encounter structure (ERMES) or MDM complex, composed of mmm1, mdm10, mdm12 and mdm34.

It is found in the mitochondrion outer membrane. Component of the ERMES/MDM complex, which serves as a molecular tether to connect the endoplasmic reticulum (ER) and mitochondria. Components of this complex are involved in the control of mitochondrial shape and protein biogenesis, and function in nonvesicular lipid trafficking between the ER and mitochondria. Mdm34 is required for the interaction of the ER-resident membrane protein mmm1 and the outer mitochondrial membrane-resident beta-barrel protein mdm10. The polypeptide is Mitochondrial distribution and morphology protein 34-2 (Penicillium rubens (strain ATCC 28089 / DSM 1075 / NRRL 1951 / Wisconsin 54-1255) (Penicillium chrysogenum)).